The following is an 85-amino-acid chain: Mitochondrial protein pet191 homolog (85 aa).

The region spanning 18–61 is the CHCH domain; that stretch reads HSDCMFVKKKSARECLKNKDELPEECKNLIEAYGECKRQMLDMT. Residues 21-32 carry the Cx10C motif motif; the sequence is CMFVKKKSAREC. 2 disulfide bridges follow: Cys-21-Cys-53 and Cys-32-Cys-43. A Cx9C motif motif is present at residues 43-53; sequence CKNLIEAYGEC. The interval 65 to 85 is disordered; sequence RIAPEKNTDQDTEKPSNVDEQ.

Belongs to the PET191 family.

Its subcellular location is the mitochondrion. In terms of biological role, involved in the assembly of cytochrome c oxidase. This chain is Mitochondrial protein pet191 homolog, found in Schizosaccharomyces pombe (strain 972 / ATCC 24843) (Fission yeast).